A 123-amino-acid polypeptide reads, in one-letter code: Small ribosomal subunit protein uS12 (123 aa).

The residue at position 89 (D89) is a 3-methylthioaspartic acid.

It belongs to the universal ribosomal protein uS12 family. In terms of assembly, part of the 30S ribosomal subunit. Contacts proteins S8 and S17. May interact with IF1 in the 30S initiation complex.

Its function is as follows. With S4 and S5 plays an important role in translational accuracy. Functionally, interacts with and stabilizes bases of the 16S rRNA that are involved in tRNA selection in the A site and with the mRNA backbone. Located at the interface of the 30S and 50S subunits, it traverses the body of the 30S subunit contacting proteins on the other side and probably holding the rRNA structure together. The combined cluster of proteins S8, S12 and S17 appears to hold together the shoulder and platform of the 30S subunit. In Rhizobium leguminosarum bv. trifolii (strain WSM2304), this protein is Small ribosomal subunit protein uS12.